The chain runs to 429 residues: UDP-N-acetylglucosamine 1-carboxyvinyltransferase (429 aa).

22 to 23 (KN) contacts phosphoenolpyruvate. UDP-N-acetyl-alpha-D-glucosamine is bound at residue arginine 102. The Proton donor role is filled by cysteine 126. Cysteine 126 is subject to 2-(S-cysteinyl)pyruvic acid O-phosphothioketal. UDP-N-acetyl-alpha-D-glucosamine contacts are provided by residues 131–135 (RPVDL), aspartate 316, and isoleucine 338.

It belongs to the EPSP synthase family. MurA subfamily.

It localises to the cytoplasm. The catalysed reaction is phosphoenolpyruvate + UDP-N-acetyl-alpha-D-glucosamine = UDP-N-acetyl-3-O-(1-carboxyvinyl)-alpha-D-glucosamine + phosphate. It participates in cell wall biogenesis; peptidoglycan biosynthesis. Cell wall formation. Adds enolpyruvyl to UDP-N-acetylglucosamine. The sequence is that of UDP-N-acetylglucosamine 1-carboxyvinyltransferase from Afipia carboxidovorans (strain ATCC 49405 / DSM 1227 / KCTC 32145 / OM5) (Oligotropha carboxidovorans).